A 122-amino-acid chain; its full sequence is Small ribosomal subunit protein bS6 (122 aa).

The tract at residues 97–122 is disordered; the sequence is TAPSPMMKAVQKEDAAKSHRAEAPAA. A compositionally biased stretch (basic and acidic residues) spans 106 to 122; that stretch reads VQKEDAAKSHRAEAPAA.

Belongs to the bacterial ribosomal protein bS6 family.

In terms of biological role, binds together with bS18 to 16S ribosomal RNA. The polypeptide is Small ribosomal subunit protein bS6 (Janthinobacterium sp. (strain Marseille) (Minibacterium massiliensis)).